The sequence spans 341 residues: UDP-N-acetylenolpyruvoylglucosamine reductase (341 aa).

The FAD-binding PCMH-type domain occupies 12 to 182; it reads LSAYAKRLDI…ISVGLLLKKN (171 aa). R158 is a catalytic residue. S228 acts as the Proton donor in catalysis. The active site involves E324.

The protein belongs to the MurB family. FAD serves as cofactor.

It is found in the cytoplasm. It carries out the reaction UDP-N-acetyl-alpha-D-muramate + NADP(+) = UDP-N-acetyl-3-O-(1-carboxyvinyl)-alpha-D-glucosamine + NADPH + H(+). Its pathway is cell wall biogenesis; peptidoglycan biosynthesis. Functionally, cell wall formation. The chain is UDP-N-acetylenolpyruvoylglucosamine reductase from Photorhabdus laumondii subsp. laumondii (strain DSM 15139 / CIP 105565 / TT01) (Photorhabdus luminescens subsp. laumondii).